The following is a 2111-amino-acid chain: MTQNCVAPVAIIGMACRLPGAINSPQQLWEALLRGDDFVTEIPTGRWDAEEYYDPEPGVPGRSVSKWGAFLDDPAAFDPEFFGITEREAAAIDPQHRLLLETAWEAVEHSGLNPAGLAGSATGVFMGLTHNDYAHLAADAKALEGPYGFTGTSFSLASGRIAYALGVHGPAITVDTACSSSLSAIHMACRSLHDGESDVALAGGVSVLLEPRKAAGGSAAGMLSPTGHCHAFDTAADGFVSAEGCVVLTLKRLDDAVADGDRILAVIRGTATNQDGRTVNIATPSADAQAKVYRMALKAAGVEPGTVGLVEAHGTGTPVGDPLEFSSLAEVYGTDGPCALGSIKTNFGHTQSAAGALGVMKAVLALQHNVIPQNLHFTRLPDQMAEIETGLFVPETITPWPVREGQPRRAAVSAYGLSGTNVHAVLEQAPESPAETAAEAISPKAGNALVFPVSASSADALRSTAQHLADWLLRSGDGNGRGPAIDLGDLAYTLARRRGFRAARSAVLAGDRGTLVEGLRQIADGEAMPQQAVTNDDRGPVWVFSGQGSQWASMGAELLDREPAFAAAIAELEPLIAAESDFSVTEALTASETVTGIDRVQPTIFAVQVALAAAMRSHGVVPGAVIGHSMGEVAASVVSGALSLEDGVKVICRRTRLMTRIAGSGAMAMVELPAQQVLSELASRGVDDVVLSVVASPQSTVVGGATASVRELIEMWESRGVMAREIAVDVASHSPQVDPILDDLIEALADLDPAEPEIPYYSATLYDPRDYADYDAYYWADNLRHTVRFSAAVQAALEDGHRVFAELSPHPLLTHPVEQTARSLDMPLAVFAAMRRQQEMPHGLLGFVADLHSAGAAVDFSVLYPTGRLLDAPLPAWTHSTLLLDRELESSAPGVPSVSVHPLLGSHVVLPQEPEEHLWQGDVGTEAHPWLSDHRVHQVAVLPGAAYCEMALAAVTPVLGDTGEVHDLKFHDMLLLDDATPVWVSAAVTAPGTAEFGVETHQSGDRTQRATAVLRGDVDAERPAAHSIDALLAAHPNRVDGDELRAGFGTVGIGHGAAFAGLSEAYVATAAEPTVVAAVALPGPLRSGQRGYTVHPALLDACFQSVIAHPEVQNIASGMLLPLGVRRLRAYGSTRNVRYCLSRIVKADSFGVEADLELLDADGTVLLSAMGLQLGTGNSDKAEEERLLDERLLTIEWQQRELPRPEGSETVDAGSWLVILAGDDDENPRAAGVVSALIGAGMPTTTMAWSHDADHDAQAAALTARLDEQPLAGVAVIVGDSETGTDAHDVGADARRGADHVRHLVRIARTLADAVGEPPRLYVVTHRSQHVLDTDEPYLEHSGLRGLIRVVGMEHPRLRATQIDVDDSTAHEALVRQLLSGSPEDETAWRDGQWYAARLCPSPLRAAERRTAVADNASEGMRLVVRNPGDLESMELVTFERGTPGPGQIEVAVKASSINFADVLVAFGRCPSFDGRLPELGSEFGGVVTAVGPGVTTHRVGDRVGGVSANGCWSNFVTCEADLATKLPEGISEHEAAAVGLAYGTVWLGLTELARMSAGDKILIHSATGGVGQAAIAVARAAGAEIYATAGSEKRRQLLRDWGIEHVYDSRTTAFADQIRTDTDGYGVDIVLNSVTGPAQRAGLELLAFGGRFVEIGKRDIYADTRLGLFPFRRNLSFYAVDLALMTVTHPQKIRDLLATVYRLIADGTLPLPEITHYPLEEAATAIRIMGGAQHTGKLVIDIPDTGQSQVVVPPEQVPVFRGDGAYVITGGLGGLGLFLAERMAAAGCGRIVVNSRSAPSTRSSEIIELIRATGADIVVECGDIAEPDTALRLVAAATQTGLPLRGVLHAAAVVEDATLANITDELVEHDWAPKVYGAWNLHQAVQSGGPATSELDWFCAFSSAAALVGSPGQGAYAAANSWLDAFMQWRRAQGLPATSIAWGAWGEIGRGTAMAEGDNAIAPDEGAYAFEAILRHDRVYNGYAPVLGASWLTAFAQRSPFAELFLADTQGASETRKLRSELAALPREEWPTHLRRLIAEQVGLLLRRTVDPDRPLSEYGLDSLGHLELRTRIETETGVRVSAMDMTTIRGLAQRLCEMLDTDDAVSAPS.

An N-terminal signal peptide occupies residues 1–15 (MTQNCVAPVAIIGMA). A lipid anchor (N-palmitoyl cysteine) is attached at cysteine 16. A lipid anchor (S-diacylglycerol cysteine) is attached at cysteine 16. The region spanning 16–428 (CRLPGAINSP…GTNVHAVLEQ (413 aa)) is the Ketosynthase family 3 (KS3) domain. The active-site Acyl-thioester intermediate; for beta-ketoacyl synthase activity is cysteine 178. Residues histidine 313 and histidine 349 each act as for beta-ketoacyl synthase activity in the active site. A linker domain (LD) region spans residues 430–537 (PESPAETAAE…MPQQAVTNDD (108 aa)). An acyltransferase (AT) region spans residues 538–837 (RGPVWVFSGQ…LAVFAAMRRQ (300 aa)). Serine 629 functions as the Acyl-ester intermediate; for acyltransferase activity in the catalytic mechanism. The tract at residues 896–1176 (PSVSVHPLLG…LSAMGLQLGT (281 aa)) is dehydratase (DH). The interval 901-1025 (HPLLGSHVVL…GDVDAERPAA (125 aa)) is N-terminal hotdog fold. The 283-residue stretch at 901–1183 (HPLLGSHVVL…LGTGNSDKAE (283 aa)) folds into the PKS/mFAS DH domain. Residue histidine 934 is the Proton acceptor; for dehydratase activity of the active site. The interval 1036–1183 (PNRVDGDELR…LGTGNSDKAE (148 aa)) is C-terminal hotdog fold. Aspartate 1100 (proton donor; for dehydratase activity) is an active-site residue. Residues 1215 to 1391 (SWLVILAGDD…SPEDETAWRD (177 aa)) are pseudo beta-ketoacyl reductase (PsiKR). Residues 1419–1743 (EGMRLVVRNP…QHTGKLVIDI (325 aa)) form an enoylreductase (ER) region. Residues 1765–2008 (GAYVITGGLG…RSPFAELFLA (244 aa)) are beta-ketoacyl reductase (KR). Residues 1773-1776 (LGGL), 1796-1799 (SRSA), 1824-1825 (DI), and 1902-1903 (FS) contribute to the NADP(+) site. Residues 2029–2104 (EEWPTHLRRL…QRLCEMLDTD (76 aa)) form the Carrier domain. Serine 2064 carries the post-translational modification O-(pantetheine 4'-phosphoryl)serine.

Homodimer.

The protein localises to the cell membrane. The protein operates within lipid metabolism; fatty acid biosynthesis. Its function is as follows. Polyketide synthase involved in the biosynthesis of 2,4-dimethyl-2-eicosenoic acid, a lipid component of the lipooligosaccharides (LOS) which are not located at the bacterial surface but rather in deeper compartments of the cell envelope of M.smegmatis. The sequence is that of Mycocerosic acid synthase-like polyketide synthase from Mycolicibacterium smegmatis (strain ATCC 700084 / mc(2)155) (Mycobacterium smegmatis).